The sequence spans 425 residues: Formyl-CoA:oxalate CoA-transferase (425 aa).

CoA contacts are provided by residues 17–18 (QS), R38, 72–75 (LDTK), 96–98 (NFG), R104, and 136–139 (KVYE). D168 functions as the Nucleophile in the catalytic mechanism. Residue 247-249 (GGQ) coordinates substrate.

Belongs to the CoA-transferase III family. Frc subfamily. As to quaternary structure, homodimer.

The enzyme catalyses formyl-CoA + oxalate = oxalyl-CoA + formate. The protein operates within metabolic intermediate degradation; oxalate degradation; CO(2) and formate from oxalate: step 1/2. In terms of biological role, involved in the catabolism of oxalate and in the adapatation to low pH via the induction of the oxalate-dependent acid tolerance response (ATR). Catalyzes the transfer of the CoA moiety from formyl-CoA to oxalate. The chain is Formyl-CoA:oxalate CoA-transferase from Rhodopseudomonas palustris (strain ATCC BAA-98 / CGA009).